Consider the following 70-residue polypeptide: MSNKMTGLVKWFDAGKGFGFISPADGSKDVFVHFSAIQGNDYKTLDEGQNVEFSIEQGQKGPSAVNVVAL.

The 61-residue stretch at 7–67 (GLVKWFDAGK…GQKGPSAVNV (61 aa)) folds into the CSD domain.

The protein localises to the cytoplasm. The polypeptide is Cold shock-like protein CspB (cspB) (Yersinia enterocolitica).